The chain runs to 48 residues: Small, acid-soluble spore protein N (48 aa).

The segment at M1–E48 is disordered. Basic and acidic residues predominate over residues N27–N37.

Belongs to the SspN family.

The protein localises to the spore core. This is Small, acid-soluble spore protein N from Bacillus velezensis (strain DSM 23117 / BGSC 10A6 / LMG 26770 / FZB42) (Bacillus amyloliquefaciens subsp. plantarum).